A 42-amino-acid polypeptide reads, in one-letter code: Photosystem II reaction center protein J (42 aa).

A helical transmembrane segment spans residues 10–30; it reads IPLWLVGTVAGILVLGLVGLF.

It belongs to the PsbJ family. As to quaternary structure, PSII is composed of 1 copy each of membrane proteins PsbA, PsbB, PsbC, PsbD, PsbE, PsbF, PsbH, PsbI, PsbJ, PsbK, PsbL, PsbM, PsbT, PsbX, PsbY, PsbZ, Psb30/Ycf12, at least 3 peripheral proteins of the oxygen-evolving complex and a large number of cofactors. It forms dimeric complexes.

It is found in the plastid. Its subcellular location is the chloroplast thylakoid membrane. In terms of biological role, one of the components of the core complex of photosystem II (PSII). PSII is a light-driven water:plastoquinone oxidoreductase that uses light energy to abstract electrons from H(2)O, generating O(2) and a proton gradient subsequently used for ATP formation. It consists of a core antenna complex that captures photons, and an electron transfer chain that converts photonic excitation into a charge separation. This Staurastrum punctulatum (Green alga) protein is Photosystem II reaction center protein J.